Consider the following 640-residue polypeptide: Spindle assembly abnormal protein 6 homolog (640 aa).

Residues 40–92 (VHKKDLAVRLTDDADPFFLYNLVISEEDFQSLKSQQGLLVDFSAFPQKFIDLL) form the PISA domain. Residues 154-475 (LARCLKCLKE…KQLLKTNENV (322 aa)) are a coiled coil.

As to quaternary structure, nine homodimers form a cartwheel structure with an internal diameter of 23 nM and radial spokes connecting to the microtubule triplets.

The protein resides in the cytoplasm. Its subcellular location is the cytoskeleton. It is found in the microtubule organizing center. The protein localises to the centrosome. Functionally, central scaffolding component of the centrioles ensuring their 9-fold symmetry. Required for centrosome biogenesis and duplication: required both for mother-centriole-dependent centriole duplication and deuterosome-dependent centriole amplification in multiciliated cells. The protein is Spindle assembly abnormal protein 6 homolog (SASS6) of Gallus gallus (Chicken).